Reading from the N-terminus, the 284-residue chain is MPFSRLFGKKEKNQMDDIVEEGVQRVQELPMDKIFPNQFQPRTVFDQDKIDELARTIRIHGVIQPIVVREMEPDYYEIIAGERRFRAVLSLEMEKIPAIIQNLDDEEVAAIALIENLQREELTPIEEAKAYRSLLDMQDVTQEALAQRVGKSQSAIANKMRLLKLPETVQEAVLNKQISERHARSLLALETEEQQVAILAEIAENHWNVKQTEARIQEILGVKKPVATKKTKPKRQAISRDVRIAMNTIKQSVTMVKDNGMDLDFTEEETDDFYQITIQIPKKK.

A DNA-binding region (H-T-H motif) is located at residues 143–162 (EALAQRVGKSQSAIANKMRL).

The protein belongs to the ParB family.

Its subcellular location is the cytoplasm. The protein resides in the nucleoid. Effects nucleoid occlusion by binding relatively nonspecifically to DNA and preventing the assembly of the division machinery in the vicinity of the nucleoid, especially under conditions that disturb the cell cycle. It helps to coordinate cell division and chromosome segregation by preventing the formation of the Z ring through the nucleoid, which would cause chromosome breakage. This chain is Nucleoid occlusion protein, found in Listeria monocytogenes serotype 4b (strain CLIP80459).